We begin with the raw amino-acid sequence, 155 residues long: MHIEQIEGTLSAAGMRIALVVSRFNDFIGQKLVEGAVDCIRRHGGSEEQMAIYRCPGAFELPMVSKKAALSGKYDAVIALGVIIRGSTPHFDVIAAEATKGIAQASLETMIPIAFGVLTTENLEQAIERAGTKAGNKGFDAAMTAIEMVNLYRQM.

Residues Phe24, 58–60, and 82–84 each bind 5-amino-6-(D-ribitylamino)uracil; these read AFE and VII. Residue 87-88 coordinates (2S)-2-hydroxy-3-oxobutyl phosphate; sequence ST. The active-site Proton donor is the His90. Residue Phe115 participates in 5-amino-6-(D-ribitylamino)uracil binding. Arg129 is a binding site for (2S)-2-hydroxy-3-oxobutyl phosphate.

Belongs to the DMRL synthase family.

It catalyses the reaction (2S)-2-hydroxy-3-oxobutyl phosphate + 5-amino-6-(D-ribitylamino)uracil = 6,7-dimethyl-8-(1-D-ribityl)lumazine + phosphate + 2 H2O + H(+). The protein operates within cofactor biosynthesis; riboflavin biosynthesis; riboflavin from 2-hydroxy-3-oxobutyl phosphate and 5-amino-6-(D-ribitylamino)uracil: step 1/2. Its function is as follows. Catalyzes the formation of 6,7-dimethyl-8-ribityllumazine by condensation of 5-amino-6-(D-ribitylamino)uracil with 3,4-dihydroxy-2-butanone 4-phosphate. This is the penultimate step in the biosynthesis of riboflavin. This chain is 6,7-dimethyl-8-ribityllumazine synthase, found in Chlorobium chlorochromatii (strain CaD3).